The chain runs to 297 residues: MTSSIFRTIGIIGYSRHPKAVHTYDILYHWLYSKGITVIIEHHAASLLNVQKAVVGDLNDIGNYADLAIVIGGDGNMLRAANILAQHDIKVIGINRGTLGFLTDLDPNSALVELSDVLSGHFINEKRFLLDVTVQRYNKLIRLGSAINEVILHTNTIRDMIEFELYIDDNFIFSQRSDGLIISTPTGSTAYALSAGGPILSPTVDAILLVPICPHTLSSRPVVINSKSIICLKFSKVTSELKIGYDNQTPVLVCKEEEIFIKRSNHYLDLIHPNNYNYFKTLNIKLGWSQNIAETKK.

The active-site Proton acceptor is Asp74. NAD(+)-binding positions include 74-75, Arg79, 148-149, Arg176, Asp178, 189-194, and Gln248; these read DG, NE, and TAYALS.

This sequence belongs to the NAD kinase family. It depends on a divalent metal cation as a cofactor.

It is found in the cytoplasm. The enzyme catalyses NAD(+) + ATP = ADP + NADP(+) + H(+). Its function is as follows. Involved in the regulation of the intracellular balance of NAD and NADP, and is a key enzyme in the biosynthesis of NADP. Catalyzes specifically the phosphorylation on 2'-hydroxyl of the adenosine moiety of NAD to yield NADP. The chain is NAD kinase from Blochmanniella pennsylvanica (strain BPEN).